The following is a 320-amino-acid chain: uncharacterized protein (320 aa).

7 consecutive transmembrane segments (helical) span residues 24 to 44 (FEFS…IFFI), 65 to 85 (FVLS…LWSL), 105 to 125 (TTSC…FIVV), 132 to 152 (SWFV…IAIL), 179 to 199 (ISLT…IYTF), 226 to 246 (MIPI…YFGY), and 253 to 275 (TSRW…MLSL).

It localises to the membrane. This is an uncharacterized protein from Caenorhabditis elegans.